The chain runs to 321 residues: Cytochrome c biogenesis protein CcsA (321 aa).

8 helical membrane passes run 17–37, 44–64, 71–91, 98–118, 143–163, 225–245, 258–275, and 286–306; these read IVSIVITIHLITLLVDEIVGL, GMISTFLCITGLLVTRWIYSG, LYESLIFLSWSFSIIHMIPYF, LSLVTAPSAIFTQGFATSGLL, MVLSYGALLCGSLLSVALLVI, VISLGFIFLTIGILSGAVWAN, ETWAFITWTIFAIYLHTR, and AIVASIGFIIIWICYFGVNLL.

It belongs to the CcmF/CycK/Ccl1/NrfE/CcsA family. In terms of assembly, may interact with Ccs1.

It is found in the plastid. It localises to the chloroplast thylakoid membrane. Its function is as follows. Required during biogenesis of c-type cytochromes (cytochrome c6 and cytochrome f) at the step of heme attachment. This chain is Cytochrome c biogenesis protein CcsA, found in Buxus microphylla (Littleleaf boxwood).